Here is a 351-residue protein sequence, read N- to C-terminus: MSWYSKIYVAVREYRAKHKITGWILTRCLNVLLFIQLILLWWSLYMYVTVTIGYYVQSTIQATIYLIVGSFLFVMSMWSLAKTLFTRVGRVPERYRPSKELEDRLKAVTPMEKNRYVVEKSTPEQLAQQNTILEEMCTYCKVVVAECDQVGRLKYCYECGHIKPDRARHCSSCGKCCIKYDHHCPWINMCVTHVNYKYFLLYIIYTSFLVYWYLLTSLEGAVRYFINQQWTDELGKFLFYLFSFIVGGVFGYYPLGELIIFHYQLISLNETTVEQTKPALLRFDNAADYNMGKYNNFQSVFGWGLWLCPIDSSTQDGLHFDIRYVNTQQRNRFVRIEEEPSSTQSSQSSIQ.

4 helical membrane passes run 21 to 43, 60 to 80, 198 to 218, and 241 to 261; these read TGWILTRCLNVLLFIQLILLWWS, IQATIYLIVGSFLFVMSMWSL, YFLLYIIYTSFLVYWYLLTSL, and LFSFIVGGVFGYYPLGELIIF. Residues 154 to 204 form the DHHC domain; that stretch reads KYCYECGHIKPDRARHCSSCGKCCIKYDHHCPWINMCVTHVNYKYFLLYII.

Belongs to the DHHC palmitoyltransferase family. Expressed during spermatogenesis in budding and budded spermatids.

The protein localises to the membrane. The enzyme catalyses L-cysteinyl-[protein] + hexadecanoyl-CoA = S-hexadecanoyl-L-cysteinyl-[protein] + CoA. Its function is as follows. Involved in spermatogenesis, specifically in the morphogenesis of fibrous body-membranous organelles (FB-MO), which are Golgi-derived organelles used for transporting sperm-specific components, in spermatocytes and in their localization into budding spermatids. Required for the proper formation of spermatids and spermatozoa. This chain is Palmitoyltransferase spe-10, found in Caenorhabditis elegans.